The chain runs to 546 residues: Chaperonin GroEL (546 aa).

ATP is bound by residues 30–33 (TLGP), Lys-51, 87–91 (DGTTT), Gly-415, and Asp-495.

The protein belongs to the chaperonin (HSP60) family. In terms of assembly, forms a cylinder of 14 subunits composed of two heptameric rings stacked back-to-back. Interacts with the co-chaperonin GroES.

It is found in the cytoplasm. It catalyses the reaction ATP + H2O + a folded polypeptide = ADP + phosphate + an unfolded polypeptide.. Its function is as follows. Together with its co-chaperonin GroES, plays an essential role in assisting protein folding. The GroEL-GroES system forms a nano-cage that allows encapsulation of the non-native substrate proteins and provides a physical environment optimized to promote and accelerate protein folding. The protein is Chaperonin GroEL of Alteromonas mediterranea (strain DSM 17117 / CIP 110805 / LMG 28347 / Deep ecotype).